Consider the following 372-residue polypeptide: Cytochrome b (372 aa).

The next 4 membrane-spanning stretches (helical) occupy residues 32–52 (LGFN…CLSW), 77–99 (FIIR…IHII), 114–134 (VWFF…IGYT), and 180–200 (LHSI…AHFF). His83 and His97 together coordinate heme b. Heme b contacts are provided by His184 and His198. Residue His203 coordinates a ubiquinone. Transmembrane regions (helical) follow at residues 228-248 (YYLR…YYIC), 297-317 (LLFV…LIFI), 330-350 (LVLF…VLCF), and 351-371 (PLWM…VCRL).

It belongs to the cytochrome b family. The main subunits of complex b-c1 are: cytochrome b, cytochrome c1 and the Rieske protein. Requires heme b as cofactor.

The protein resides in the mitochondrion inner membrane. Its function is as follows. Component of the ubiquinol-cytochrome c reductase complex (complex III or cytochrome b-c1 complex) that is part of the mitochondrial respiratory chain. The b-c1 complex mediates electron transfer from ubiquinol to cytochrome c. Contributes to the generation of a proton gradient across the mitochondrial membrane that is then used for ATP synthesis. This is Cytochrome b (MT-CYB) from Trypanoplasma borreli.